Reading from the N-terminus, the 452-residue chain is Phosphoglucosamine mutase (452 aa).

The Phosphoserine intermediate role is filled by serine 103. Residues serine 103, aspartate 243, aspartate 245, and aspartate 247 each coordinate Mg(2+). Phosphoserine is present on serine 103.

Belongs to the phosphohexose mutase family. Mg(2+) serves as cofactor. Activated by phosphorylation.

It catalyses the reaction alpha-D-glucosamine 1-phosphate = D-glucosamine 6-phosphate. In terms of biological role, catalyzes the conversion of glucosamine-6-phosphate to glucosamine-1-phosphate. The polypeptide is Phosphoglucosamine mutase (Exiguobacterium sp. (strain ATCC BAA-1283 / AT1b)).